The chain runs to 492 residues: Cytoplasmic dynein 1 light intermediate chain 2 (492 aa).

An ATP-binding site is contributed by 61–68 (GEDGSGKT). 3 disordered regions span residues 188 to 207 (EEGCQGSPQRRGPLTSGSDE), 370 to 423 (LAKQ…KNNA), and 437 to 492 (LSKK…ENEA). 3 positions are modified to phosphoserine: Ser-194, Ser-383, and Ser-391. Residues 370–383 (LAKQPATPTRTSES) show a composition bias toward polar residues. Arg-397 bears the Omega-N-methylarginine mark. Positions 437–469 (LSKKTGSPGSPSAGGVQSTAKKSGQKTVLSNVQ) are enriched in polar residues. Thr-441 carries the phosphothreonine modification. Residues Ser-443 and Ser-446 each carry the phosphoserine modification. Residues 471-480 (ELDRMTRKPD) are compositionally biased toward basic and acidic residues. Positions 482 to 492 (MVTNSSTENEA) are enriched in polar residues.

It belongs to the dynein light intermediate chain family. In terms of assembly, homodimer. The cytoplasmic dynein 1 complex consists of two catalytic heavy chains (HCs) and a number of non-catalytic subunits presented by intermediate chains (ICs), light intermediate chains (LICs) and light chains (LCs); the composition seems to vary in respect to the IC, LIC and LC composition. The heavy chain homodimer serves as a scaffold for the probable homodimeric assembly of the respective non-catalytic subunits. The ICs and LICs bind directly to the HC dimer and the LCs assemble on the IC dimer. Interacts with DYNC1H1; DYNC1LI1 and DYNC1LI2 bind mutually exclusive to DYNC1H.

It is found in the cytoplasm. It localises to the cytoskeleton. Functionally, acts as one of several non-catalytic accessory components of the cytoplasmic dynein 1 complex that are thought to be involved in linking dynein to cargos and to adapter proteins that regulate dynein function. Cytoplasmic dynein 1 acts as a motor for the intracellular retrograde motility of vesicles and organelles along microtubules. May play a role in binding dynein to membranous organelles or chromosomes. The polypeptide is Cytoplasmic dynein 1 light intermediate chain 2 (Dync1li2) (Mus musculus (Mouse)).